A 180-amino-acid chain; its full sequence is Nucleoside triphosphate/diphosphate phosphatase (180 aa).

The active-site Proton donor is the R26. Mg(2+) is bound by residues N90, D106, D108, D110, D123, and E126.

It belongs to the Ntdp family. Mg(2+) serves as cofactor.

The enzyme catalyses a ribonucleoside 5'-triphosphate + H2O = a ribonucleoside 5'-diphosphate + phosphate + H(+). It carries out the reaction a ribonucleoside 5'-diphosphate + H2O = a ribonucleoside 5'-phosphate + phosphate + H(+). In terms of biological role, has nucleoside phosphatase activity towards nucleoside triphosphates and nucleoside diphosphates. This is Nucleoside triphosphate/diphosphate phosphatase from Staphylococcus aureus (strain Mu3 / ATCC 700698).